Here is a 162-residue protein sequence, read N- to C-terminus: UPF0114 protein Sputw3181_3501 (162 aa).

The next 3 membrane-spanning stretches (helical) occupy residues 15–35 (IMAPIYLGLSLVLLGLGIKFF), 53–73 (LVLVTLSLIDITLVGGLIVMV), and 136–156 (IMWYLLIHITFVLSAFAMGYL).

Belongs to the UPF0114 family.

The protein resides in the cell membrane. The protein is UPF0114 protein Sputw3181_3501 of Shewanella sp. (strain W3-18-1).